A 324-amino-acid chain; its full sequence is NAD(P)H-dependent D-xylose reductase xyl1 (324 aa).

Tyr50 (proton donor) is an active-site residue. His112 serves as a coordination point for substrate. NAD(+) contacts are provided by residues 168-169 (SN), 217-226 (SSFGPTGFME), and 273-283 (KTSRPEVMAQN).

Belongs to the aldo/keto reductase family.

It carries out the reaction an alditol + NAD(+) = an aldose + NADH + H(+). The catalysed reaction is an alditol + NADP(+) = an aldose + NADPH + H(+). The enzyme catalyses xylitol + NAD(+) = D-xylose + NADH + H(+). It catalyses the reaction xylitol + NADP(+) = D-xylose + NADPH + H(+). It functions in the pathway carbohydrate metabolism; D-xylose degradation. It participates in carbohydrate degradation; L-arabinose degradation via L-arabinitol; D-xylulose 5-phosphate from L-arabinose (fungal route): step 1/5. Functionally, catalyzes the initial reaction in the xylose utilization pathway by reducing D-xylose into xylitol. Xylose is a major component of hemicelluloses such as xylan. Most fungi utilize D-xylose via three enzymatic reactions, xylose reductase (XR), xylitol dehydrogenase (XDH), and xylulokinase, to form xylulose 5-phosphate, which enters pentose phosphate pathway. Also major aldose reductase in pentose and D-galactose catabolism. Reduces the pentose L-arabinose and the hexose D-galactose to their respective polyols. Responsible for extracellular beta-galactosidase formation and cellulase induction during growth on lactose. This chain is NAD(P)H-dependent D-xylose reductase xyl1 (xyl1), found in Hypocrea jecorina (Trichoderma reesei).